The following is a 129-amino-acid chain: uncharacterized protein (129 aa).

This is an uncharacterized protein from Archaeoglobus fulgidus (strain ATCC 49558 / DSM 4304 / JCM 9628 / NBRC 100126 / VC-16).